The primary structure comprises 101 residues: Large ribosomal subunit protein uL23 (101 aa).

Belongs to the universal ribosomal protein uL23 family. As to quaternary structure, part of the 50S ribosomal subunit. Contacts protein L29, and trigger factor when it is bound to the ribosome.

Its function is as follows. One of the early assembly proteins it binds 23S rRNA. One of the proteins that surrounds the polypeptide exit tunnel on the outside of the ribosome. Forms the main docking site for trigger factor binding to the ribosome. The sequence is that of Large ribosomal subunit protein uL23 from Synechocystis sp. (strain ATCC 27184 / PCC 6803 / Kazusa).